We begin with the raw amino-acid sequence, 145 residues long: Probable D-aminoacyl-tRNA deacylase (145 aa).

Belongs to the DTD family. Homodimer.

It is found in the cytoplasm. The enzyme catalyses glycyl-tRNA(Ala) + H2O = tRNA(Ala) + glycine + H(+). The catalysed reaction is a D-aminoacyl-tRNA + H2O = a tRNA + a D-alpha-amino acid + H(+). Functionally, an aminoacyl-tRNA editing enzyme that deacylates mischarged D-aminoacyl-tRNAs. Also deacylates mischarged glycyl-tRNA(Ala), protecting cells against glycine mischarging by AlaRS. Acts via tRNA-based rather than protein-based catalysis; rejects L-amino acids rather than detecting D-amino acids in the active site. By recycling D-aminoacyl-tRNA to D-amino acids and free tRNA molecules, this enzyme counteracts the toxicity associated with the formation of D-aminoacyl-tRNA entities in vivo and helps enforce protein L-homochirality. The protein is Probable D-aminoacyl-tRNA deacylase of Shigella flexneri serotype 5b (strain 8401).